A 368-amino-acid polypeptide reads, in one-letter code: UDP-N-acetylglucosamine--N-acetylmuramyl-(pentapeptide) pyrophosphoryl-undecaprenol N-acetylglucosamine transferase (368 aa).

UDP-N-acetyl-alpha-D-glucosamine is bound by residues threonine 10 to glycine 12, asparagine 126, serine 200, isoleucine 255, and glutamine 300.

It belongs to the glycosyltransferase 28 family. MurG subfamily.

Its subcellular location is the cell membrane. It catalyses the reaction Mur2Ac(oyl-L-Ala-gamma-D-Glu-L-Lys-D-Ala-D-Ala)-di-trans,octa-cis-undecaprenyl diphosphate + UDP-N-acetyl-alpha-D-glucosamine = beta-D-GlcNAc-(1-&gt;4)-Mur2Ac(oyl-L-Ala-gamma-D-Glu-L-Lys-D-Ala-D-Ala)-di-trans,octa-cis-undecaprenyl diphosphate + UDP + H(+). Its pathway is cell wall biogenesis; peptidoglycan biosynthesis. Its function is as follows. Cell wall formation. Catalyzes the transfer of a GlcNAc subunit on undecaprenyl-pyrophosphoryl-MurNAc-pentapeptide (lipid intermediate I) to form undecaprenyl-pyrophosphoryl-MurNAc-(pentapeptide)GlcNAc (lipid intermediate II). This Lactobacillus helveticus (strain DPC 4571) protein is UDP-N-acetylglucosamine--N-acetylmuramyl-(pentapeptide) pyrophosphoryl-undecaprenol N-acetylglucosamine transferase.